The sequence spans 864 residues: DNA mismatch repair protein MutS (864 aa).

607 to 614 (GPNMGGKS) provides a ligand contact to ATP.

It belongs to the DNA mismatch repair MutS family.

Functionally, this protein is involved in the repair of mismatches in DNA. It is possible that it carries out the mismatch recognition step. This protein has a weak ATPase activity. The chain is DNA mismatch repair protein MutS from Neisseria meningitidis serogroup C (strain 053442).